Here is a 224-residue protein sequence, read N- to C-terminus: Ribosomal RNA small subunit methyltransferase G (224 aa).

S-adenosyl-L-methionine is bound by residues G89, L94, 140-141, and R154; that span reads IE.

Belongs to the methyltransferase superfamily. RNA methyltransferase RsmG family.

The protein localises to the cytoplasm. It catalyses the reaction guanosine(527) in 16S rRNA + S-adenosyl-L-methionine = N(7)-methylguanosine(527) in 16S rRNA + S-adenosyl-L-homocysteine. Functionally, specifically methylates the N7 position of guanine in position 527 of 16S rRNA. This Bordetella avium (strain 197N) protein is Ribosomal RNA small subunit methyltransferase G.